A 269-amino-acid chain; its full sequence is 4-hydroxy-tetrahydrodipicolinate reductase (269 aa).

Residues 12-17, 102-104, and 126-129 contribute to the NAD(+) site; these read GGSGRM, GTT, and SPNM. Histidine 159 functions as the Proton donor/acceptor in the catalytic mechanism. Residue histidine 160 coordinates (S)-2,3,4,5-tetrahydrodipicolinate. Lysine 163 serves as the catalytic Proton donor. 169 to 170 contributes to the (S)-2,3,4,5-tetrahydrodipicolinate binding site; sequence GT.

The protein belongs to the DapB family.

The protein resides in the cytoplasm. The enzyme catalyses (S)-2,3,4,5-tetrahydrodipicolinate + NAD(+) + H2O = (2S,4S)-4-hydroxy-2,3,4,5-tetrahydrodipicolinate + NADH + H(+). It catalyses the reaction (S)-2,3,4,5-tetrahydrodipicolinate + NADP(+) + H2O = (2S,4S)-4-hydroxy-2,3,4,5-tetrahydrodipicolinate + NADPH + H(+). Its pathway is amino-acid biosynthesis; L-lysine biosynthesis via DAP pathway; (S)-tetrahydrodipicolinate from L-aspartate: step 4/4. Functionally, catalyzes the conversion of 4-hydroxy-tetrahydrodipicolinate (HTPA) to tetrahydrodipicolinate. This is 4-hydroxy-tetrahydrodipicolinate reductase from Leptospira borgpetersenii serovar Hardjo-bovis (strain JB197).